A 72-amino-acid chain; its full sequence is Large ribosomal subunit protein uL29 (72 aa).

It belongs to the universal ribosomal protein uL29 family.

The polypeptide is Large ribosomal subunit protein uL29 (Chlamydia felis (strain Fe/C-56) (Chlamydophila felis)).